A 439-amino-acid polypeptide reads, in one-letter code: Fibroleukin (439 aa).

The signal sequence occupies residues 1–23 (MKLANWYWLSSAVLATYGFLVVA). N-linked (GlcNAc...) asparagine glycosylation occurs at Asn-25. The stretch at 73-165 (SRIEEVFKEV…GRLEKLNLVN (93 aa)) forms a coiled coil. The interval 103–126 (ADDNGDPGRNGLLLPSTGAPGEVG) is disordered. Residues Asn-179, Asn-235, Asn-263, and Asn-336 are each glycosylated (N-linked (GlcNAc...) asparagine). Residues 204-436 (PVQHLIYKDC…EAKMMIRPKH (233 aa)) enclose the Fibrinogen C-terminal domain. Cysteines 213 and 242 form a disulfide. A disulfide bond links Cys-371 and Cys-384.

Homotetramer; disulfide-linked. In terms of tissue distribution, constitutively expressed in cytotoxic T-cells.

The protein resides in the secreted. Its function is as follows. May play a role in physiologic lymphocyte functions at mucosal sites. The protein is Fibroleukin (FGL2) of Homo sapiens (Human).